The chain runs to 183 residues: UPF0134 protein MPN_100 (183 aa).

Belongs to the UPF0134 family.

The polypeptide is UPF0134 protein MPN_100 (Mycoplasma pneumoniae (strain ATCC 29342 / M129 / Subtype 1) (Mycoplasmoides pneumoniae)).